Reading from the N-terminus, the 451-residue chain is Speckle-type POZ protein homolog (451 aa).

The segment at 51 to 75 is disordered; the sequence is EVVSSGSGNSAHGRSISPSPSSASH. Residues 60–75 are compositionally biased toward low complexity; it reads SAHGRSISPSPSSASH. An MATH domain is found at 95–225; the sequence is KFNYMWTINN…GDRLSIFCEV (131 aa). In terms of domain architecture, BTB spans 265–338; sequence SDFTLVCKSD…MYTGQTKYIE (74 aa).

Belongs to the Tdpoz family.

The protein resides in the nucleus. Its subcellular location is the nucleus speckle. The protein operates within protein modification; protein ubiquitination. Mediates ubiquitination and proteasomal degradation of target proteins, most likely in complex with cul-3. May promote the degradation of bromodomain-containing proteins such as bet-1. The protein is Speckle-type POZ protein homolog of Caenorhabditis elegans.